The following is a 75-amino-acid chain: Small ribosomal subunit protein bS18 (75 aa).

Belongs to the bacterial ribosomal protein bS18 family. Part of the 30S ribosomal subunit. Forms a tight heterodimer with protein bS6.

Binds as a heterodimer with protein bS6 to the central domain of the 16S rRNA, where it helps stabilize the platform of the 30S subunit. The sequence is that of Small ribosomal subunit protein bS18 from Methylobacillus flagellatus (strain ATCC 51484 / DSM 6875 / VKM B-1610 / KT).